The sequence spans 448 residues: Protein king tubby (448 aa).

The segment at 103–195 (HELEDEESSP…NGTGGESEGD (93 aa)) is disordered. Over residues 118–133 (QHQQSASHSANSTQSQ) the composition is skewed to low complexity. A Phosphoserine modification is found at Ser141. A compositionally biased stretch (gly residues) spans 182-191 (NGTGNGTGGE).

The protein belongs to the TUB family.

Its subcellular location is the cytoplasm. It is found in the nucleus. The protein localises to the cell projection. It localises to the cilium membrane. The protein resides in the rhabdomere. The polypeptide is Protein king tubby (Drosophila erecta (Fruit fly)).